Here is a 247-residue protein sequence, read N- to C-terminus: Carboxy-S-adenosyl-L-methionine synthase (247 aa).

S-adenosyl-L-methionine is bound by residues Y39, 64-66 (GCS), 89-90 (DN), 117-118 (DI), N132, and R199.

It belongs to the class I-like SAM-binding methyltransferase superfamily. Cx-SAM synthase family. In terms of assembly, homodimer.

The enzyme catalyses prephenate + S-adenosyl-L-methionine = carboxy-S-adenosyl-L-methionine + 3-phenylpyruvate + H2O. Its function is as follows. Catalyzes the conversion of S-adenosyl-L-methionine (SAM) to carboxy-S-adenosyl-L-methionine (Cx-SAM). The sequence is that of Carboxy-S-adenosyl-L-methionine synthase from Salmonella paratyphi B (strain ATCC BAA-1250 / SPB7).